Consider the following 184-residue polypeptide: Ribosome-recycling factor (184 aa).

It belongs to the RRF family.

The protein localises to the cytoplasm. Functionally, responsible for the release of ribosomes from messenger RNA at the termination of protein biosynthesis. May increase the efficiency of translation by recycling ribosomes from one round of translation to another. This Clostridium botulinum (strain Okra / Type B1) protein is Ribosome-recycling factor.